The following is a 164-amino-acid chain: HTH-type transcriptional regulator IscR (164 aa).

The HTH rrf2-type domain maps to 2–131; sequence RLTSKGRYAV…GSISLEELVK (130 aa). Positions 28–51 form a DNA-binding region, H-T-H motif; the sequence is LADISERQGISLSYLEQLFSRLRK. Positions 92, 98, and 104 each coordinate [2Fe-2S] cluster. Residues 140 to 164 are disordered; the sequence is DRQDSDKRRTPNGRPQETINVNLRA. Residues 152–164 show a composition bias toward polar residues; the sequence is GRPQETINVNLRA.

[2Fe-2S] cluster serves as cofactor.

Functionally, regulates the transcription of several operons and genes involved in the biogenesis of Fe-S clusters and Fe-S-containing proteins. The chain is HTH-type transcriptional regulator IscR from Xenorhabdus nematophila (strain ATCC 19061 / DSM 3370 / CCUG 14189 / LMG 1036 / NCIMB 9965 / AN6).